Reading from the N-terminus, the 347-residue chain is MRIEEDLKLGFKDVLIRPKRSTLKSRSDVELERQFTFKHSGQSWSGVPIIAANMDTVGTFSMASALASFDILTAVHKHFSVEEWQAFINNSSADVLKHVMVSTGTSDADFEKTKQILDLNPALNFVCIDVANGYSEHFVQFVAKAREAWPTKTICAGNVVTGEMCEELILSGADIVKVGIGPGSVCTTRVKTGVGYPQLSAVIECADAAHGLGGMIVSDGGCTTPGDVAKAFGGGADFVMLGGMLAGHEESGGRIVEENGEKFMLFYGMSSESAMKRHVGGVAEYRAAEGKTVKLPLRGQVENTARDILGGLRSACTYVGASRLKELTKRTTFIRVLEQENRIFNNL.

NADP(+) is bound at residue Ala-108–Ala-131. Residues Gly-181 and Gly-183 each contribute to the K(+) site. Residue Cys-186 is the Thioimidate intermediate of the active site. Position 216-239 (Ile-216–Val-239) interacts with NADP(+).

The protein belongs to the IMPDH/GMPR family. GuaC type 1 subfamily. Homotetramer.

The enzyme catalyses IMP + NH4(+) + NADP(+) = GMP + NADPH + 2 H(+). Its function is as follows. Catalyzes the irreversible NADPH-dependent deamination of GMP to IMP. It functions in the conversion of nucleobase, nucleoside and nucleotide derivatives of G to A nucleotides, and in maintaining the intracellular balance of A and G nucleotides. In Shigella flexneri, this protein is GMP reductase.